The primary structure comprises 533 residues: Aspartic proteinase sxa1 (533 aa).

The first 23 residues, 1-23 (MKASFFVFAISALQALQASVASA), serve as a signal peptide directing secretion. The Peptidase A1 domain occupies 76-434 (YFANLTLGSN…DWDAQKIGLA (359 aa)). The N-linked (GlcNAc...) asparagine glycan is linked to N79. Residue D94 is part of the active site. N106, N138, N153, N166, N271, N278, N299, and N319 each carry an N-linked (GlcNAc...) asparagine glycan. D325 is an active-site residue. N-linked (GlcNAc...) asparagine glycosylation occurs at N439.

Belongs to the peptidase A1 family.

Involved in degradation or processing of the mating pheromones. Its loss may cause a persistent response to the pheromones. It may cleave the mating pheromone M-factor. May be involved in processing of zymogens that are required for zygote formation. The polypeptide is Aspartic proteinase sxa1 (sxa1) (Schizosaccharomyces pombe (strain 972 / ATCC 24843) (Fission yeast)).